The primary structure comprises 474 residues: Rhodanese-like domain-containing protein 7 (474 aa).

Disordered stretches follow at residues 20 to 68 (SSPP…SSLK) and 179 to 198 (VSPE…PLAA). Low complexity predominate over residues 53–68 (QSQPHKLSSSPSSSLK). In terms of domain architecture, Rhodanese spans 245–368 (SDPETVVIDV…YLEEVPKTES (124 aa)). The active-site Cysteine persulfide intermediate is the C328. A disordered region spans residues 432–474 (RARARQTQFEEWGVIGGPDKGRRPATKPDSPRKKINAKLGSSI).

The chain is Rhodanese-like domain-containing protein 7 (STR7) from Arabidopsis thaliana (Mouse-ear cress).